We begin with the raw amino-acid sequence, 174 residues long: Auxin-responsive protein IAA2 (174 aa).

Positions 16-20 (LCLGL) match the EAR-like (transcriptional repression) motif. Residues 44–67 (FEETRDEEESTPPTKTQIVGWPPV) are disordered. The PB1 domain occupies 77–164 (VSYVKVSMDG…SCKRLRIMKG (88 aa)).

This sequence belongs to the Aux/IAA family. In terms of assembly, homodimers and heterodimers. Interacts with the auxin-responsive protein IAA1. Interacts with TPL. Preferentially expressed in vegetative organs.

It is found in the nucleus. Its function is as follows. Aux/IAA proteins are short-lived transcriptional factors that function as repressors of early auxin response genes at low auxin concentrations. Repression is thought to result from the interaction with auxin response factors (ARFs), proteins that bind to the auxin-responsive promoter element (AuxRE). Formation of heterodimers with ARF proteins may alter their ability to modulate early auxin response genes expression. The chain is Auxin-responsive protein IAA2 (IAA2) from Arabidopsis thaliana (Mouse-ear cress).